The following is a 467-amino-acid chain: UDP-N-acetylmuramate--L-alanine ligase (467 aa).

ATP is bound at residue 112–118; the sequence is GTHGKTT.

It belongs to the MurCDEF family.

It is found in the cytoplasm. The catalysed reaction is UDP-N-acetyl-alpha-D-muramate + L-alanine + ATP = UDP-N-acetyl-alpha-D-muramoyl-L-alanine + ADP + phosphate + H(+). The protein operates within cell wall biogenesis; peptidoglycan biosynthesis. Cell wall formation. The sequence is that of UDP-N-acetylmuramate--L-alanine ligase from Paraburkholderia xenovorans (strain LB400).